Reading from the N-terminus, the 316-residue chain is Nautilin-63 (316 aa).

Disordered regions lie at residues 1-26, 149-173, 189-238, and 259-278; these read IPDL…GPRG, PFPT…VTPF, DSRC…GIAS, and PPTS…GLNK. Over residues 10-26 the composition is skewed to low complexity; the sequence is TLPVLTKGPTGLLGPRG. Polar residues-rich tracts occupy residues 152–163, 207–216, and 269–278; these read TSRSTYGPSGSQ, GHSSPATLNS, and SGYTSDGLNK.

In terms of processing, glycosylated; contains mainly glucose, galactose, galactosamine, glucosamine and glucuronic acid. As to expression, component of the acid-soluble organic matrix of nacreous shell layers (at protein level).

The protein resides in the secreted. Functionally, involved in nacre formation. Affects morphology of calcite crystals in vitro but does not inhibit their formation. Binds chitin. The protein is Nautilin-63 of Nautilus macromphalus (Bellybutton nautilus).